Consider the following 801-residue polypeptide: Mitochondrial intermediate peptidase (801 aa).

A mitochondrion-targeting transit peptide spans 1–41 (MKDQLLVPLRRRPWTCQKCLQRLQLPRHQTRRSFETAASPF). H564 provides a ligand contact to Zn(2+). E565 is an active-site residue. Residues H568 and H571 each coordinate Zn(2+).

The protein belongs to the peptidase M3 family. It depends on Zn(2+) as a cofactor.

Its subcellular location is the mitochondrion matrix. It catalyses the reaction Release of an N-terminal octapeptide as second stage of processing of some proteins imported into the mitochondrion.. In terms of biological role, cleaves proteins, imported into the mitochondrion, to their mature size. While most mitochondrial precursor proteins are processed to the mature form in one step by mitochondrial processing peptidase (MPP), the sequential cleavage by MIP of an octapeptide after initial processing by MPP is a required step for a subgroup of nuclear-encoded precursor proteins destined for the matrix or the inner membrane. The protein is Mitochondrial intermediate peptidase (oct1) of Aspergillus fumigatus (strain CBS 144.89 / FGSC A1163 / CEA10) (Neosartorya fumigata).